A 701-amino-acid polypeptide reads, in one-letter code: Elongation factor G (701 aa).

Residues 8-291 (GRYRNIGIVA…AVIDYLPAPT (284 aa)) form the tr-type G domain. Residues 17–24 (AHVDAGKT), 89–93 (DTPGH), and 143–146 (NKMD) contribute to the GTP site.

This sequence belongs to the TRAFAC class translation factor GTPase superfamily. Classic translation factor GTPase family. EF-G/EF-2 subfamily.

The protein localises to the cytoplasm. Its function is as follows. Catalyzes the GTP-dependent ribosomal translocation step during translation elongation. During this step, the ribosome changes from the pre-translocational (PRE) to the post-translocational (POST) state as the newly formed A-site-bound peptidyl-tRNA and P-site-bound deacylated tRNA move to the P and E sites, respectively. Catalyzes the coordinated movement of the two tRNA molecules, the mRNA and conformational changes in the ribosome. This chain is Elongation factor G, found in Pseudomonas syringae pv. syringae (strain B728a).